A 224-amino-acid polypeptide reads, in one-letter code: uncharacterized protein (224 aa).

This is an uncharacterized protein from Methanocaldococcus jannaschii (strain ATCC 43067 / DSM 2661 / JAL-1 / JCM 10045 / NBRC 100440) (Methanococcus jannaschii).